The chain runs to 20 residues: Protein C activator (20 aa).

Positions 1 to 20 constitute a Peptidase S1 domain; that stretch reads VVGGDECNINEHRSLALMYA.

This sequence belongs to the peptidase S1 family. Snake venom subfamily. In terms of assembly, monomer. Post-translationally, glycosylated. Expressed by the venom gland.

It is found in the secreted. Inhibited by calcium. In terms of biological role, snake venom serine protease that selectively cleaves the heavy chain of protein C (PROC). This activation is thrombomodulin-independent. The sequence is that of Protein C activator from Agkistrodon bilineatus (Cantil).